A 274-amino-acid polypeptide reads, in one-letter code: 3',5'-cyclic adenosine monophosphate phosphodiesterase CpdA (274 aa).

The Fe cation site is built by aspartate 21, histidine 23, aspartate 63, asparagine 93, histidine 163, histidine 202, and histidine 204. Residues histidine 23, aspartate 63, and 93-94 (NH) contribute to the AMP site. An AMP-binding site is contributed by histidine 204.

Belongs to the cyclic nucleotide phosphodiesterase class-III family. It depends on Fe(2+) as a cofactor.

The enzyme catalyses 3',5'-cyclic AMP + H2O = AMP + H(+). In terms of biological role, hydrolyzes cAMP to 5'-AMP. Plays an important regulatory role in modulating the intracellular concentration of cAMP, thereby influencing cAMP-dependent processes. This is 3',5'-cyclic adenosine monophosphate phosphodiesterase CpdA from Vibrio vulnificus (strain CMCP6).